The sequence spans 378 residues: Chaperone protein DnaJ (378 aa).

The 65-residue stretch at 6-70 folds into the J domain; sequence DYYDVLGVSR…QKRQQYDQFG (65 aa). The CR-type zinc finger occupies 137–219; it reads GKTSEISYSR…CHGKGVKTQK (83 aa). Positions 150, 153, 167, 170, 193, 196, 207, and 210 each coordinate Zn(2+). 4 CXXCXGXG motif repeats span residues 150–157, 167–174, 193–200, and 207–214; these read CEVCKGSG, CDKCGGSG, CDKCTGSG, and CHNCHGKG.

The protein belongs to the DnaJ family. As to quaternary structure, homodimer. It depends on Zn(2+) as a cofactor.

Its subcellular location is the cytoplasm. Functionally, participates actively in the response to hyperosmotic and heat shock by preventing the aggregation of stress-denatured proteins and by disaggregating proteins, also in an autonomous, DnaK-independent fashion. Unfolded proteins bind initially to DnaJ; upon interaction with the DnaJ-bound protein, DnaK hydrolyzes its bound ATP, resulting in the formation of a stable complex. GrpE releases ADP from DnaK; ATP binding to DnaK triggers the release of the substrate protein, thus completing the reaction cycle. Several rounds of ATP-dependent interactions between DnaJ, DnaK and GrpE are required for fully efficient folding. Also involved, together with DnaK and GrpE, in the DNA replication of plasmids through activation of initiation proteins. In Lactobacillus delbrueckii subsp. bulgaricus (strain ATCC 11842 / DSM 20081 / BCRC 10696 / JCM 1002 / NBRC 13953 / NCIMB 11778 / NCTC 12712 / WDCM 00102 / Lb 14), this protein is Chaperone protein DnaJ.